The chain runs to 246 residues: 2,5-diamino-6-ribosylamino-4(3H)-pyrimidinone 5'-phosphate reductase (246 aa).

NADP(+) is bound by residues threonine 78, aspartate 82, leucine 163, and 186 to 190 (GAEVL).

It belongs to the HTP reductase family. Homodimer.

It carries out the reaction 2,5-diamino-6-(1-D-ribitylamino)pyrimidin-4(3H)-one 5'-phosphate + NADP(+) = 2,5-diamino-6-(1-D-ribosylamino)pyrimidin-4(3H)-one 5'-phosphate + NADPH + H(+). The catalysed reaction is 2,5-diamino-6-(1-D-ribitylamino)pyrimidin-4(3H)-one 5'-phosphate + NAD(+) = 2,5-diamino-6-(1-D-ribosylamino)pyrimidin-4(3H)-one 5'-phosphate + NADH + H(+). The protein operates within cofactor biosynthesis; riboflavin biosynthesis. Functionally, catalyzes an early step in riboflavin biosynthesis, the NADPH-dependent reduction of the ribose side chain of 2,5-diamino-6-ribosylamino-4(3H)-pyrimidinone 5'-phosphate, yielding 2,5-diamino-6-ribitylamino-4(3H)-pyrimidinone 5'-phosphate. The chain is 2,5-diamino-6-ribosylamino-4(3H)-pyrimidinone 5'-phosphate reductase (RIB7) from Eremothecium gossypii (strain ATCC 10895 / CBS 109.51 / FGSC 9923 / NRRL Y-1056) (Yeast).